The primary structure comprises 296 residues: Acetylglutamate kinase (296 aa).

Residues glycine 69–glycine 70, arginine 91, and asparagine 193 each bind substrate.

The protein belongs to the acetylglutamate kinase family. ArgB subfamily.

It localises to the cytoplasm. The enzyme catalyses N-acetyl-L-glutamate + ATP = N-acetyl-L-glutamyl 5-phosphate + ADP. Its pathway is amino-acid biosynthesis; L-arginine biosynthesis; N(2)-acetyl-L-ornithine from L-glutamate: step 2/4. In terms of biological role, catalyzes the ATP-dependent phosphorylation of N-acetyl-L-glutamate. The sequence is that of Acetylglutamate kinase from Albidiferax ferrireducens (strain ATCC BAA-621 / DSM 15236 / T118) (Rhodoferax ferrireducens).